We begin with the raw amino-acid sequence, 678 residues long: DNA ligase (678 aa).

Residues 32 to 36 (DSEYD), 81 to 82 (SL), and Glu113 each bind NAD(+). Lys115 (N6-AMP-lysine intermediate) is an active-site residue. Residues Arg136, Glu174, Lys291, and Lys315 each contribute to the NAD(+) site. Residues Cys409, Cys412, Cys427, and Cys433 each coordinate Zn(2+). Residues 596–678 (ASDNPFAGKT…MRLLGESSDA (83 aa)) form the BRCT domain.

This sequence belongs to the NAD-dependent DNA ligase family. LigA subfamily. Requires Mg(2+) as cofactor. Mn(2+) serves as cofactor.

The catalysed reaction is NAD(+) + (deoxyribonucleotide)n-3'-hydroxyl + 5'-phospho-(deoxyribonucleotide)m = (deoxyribonucleotide)n+m + AMP + beta-nicotinamide D-nucleotide.. Its function is as follows. DNA ligase that catalyzes the formation of phosphodiester linkages between 5'-phosphoryl and 3'-hydroxyl groups in double-stranded DNA using NAD as a coenzyme and as the energy source for the reaction. It is essential for DNA replication and repair of damaged DNA. The protein is DNA ligase of Sodalis glossinidius (strain morsitans).